The following is a 291-amino-acid chain: 5-hydroxytryptamine receptor 1D (291 aa).

The helical transmembrane segment at 30-54 (LCDIWLSSDITCCTASILHLCVIAL) threads the bilayer. Cysteines 31 and 108 form a disulfide. Positions 38 and 42 each coordinate serotonin. Positions 55 to 57 (DRY) match the DRY motif; important for ligand-induced conformation changes motif. The chain crosses the membrane as a helical span at residues 75 to 96 (AAAMIAIVWAISICISIPPLFW). An N-linked (GlcNAc...) asparagine glycan is attached at Asn-111. 3 helical membrane passes run 115 to 138 (ISYT…ILYG), 221 to 246 (KTLG…VLPI), and 256 to 279 (ALFD…YTVF). Serotonin is bound at residue Ser-241. Positions 272–276 (NPIIY) match the NPxxY motif; important for ligand-induced conformation changes and signaling motif.

The protein belongs to the G-protein coupled receptor 1 family. In terms of assembly, homodimer. Heterodimer with HTR1B.

The protein resides in the cell membrane. Its function is as follows. G-protein coupled receptor for 5-hydroxytryptamine (serotonin). Also functions as a receptor for ergot alkaloid derivatives, various anxiolytic and antidepressant drugs and other psychoactive substances. Ligand binding causes a conformation change that triggers signaling via guanine nucleotide-binding proteins (G proteins) and modulates the activity of downstream effectors, such as adenylate cyclase. HTR1D is coupled to G(i)/G(o) G alpha proteins and mediates inhibitory neurotransmission by inhibiting adenylate cyclase activity. Regulates the release of 5-hydroxytryptamine in the brain, and thereby affects neural activity. May also play a role in regulating the release of other neurotransmitters. May play a role in vasoconstriction. The protein is 5-hydroxytryptamine receptor 1D (HTR1D) of Sus scrofa (Pig).